A 94-amino-acid chain; its full sequence is Translation initiation factor IF-1 (94 aa).

Positions 1 to 72 constitute an S1-like domain; it reads MAKEELIQFE…EKGRLIFRHK (72 aa). The disordered stretch occupies residues 71-94; it reads HKDERPGGTGAPRGAPPRGQFRRR. Residues 82-94 show a composition bias toward low complexity; the sequence is PRGAPPRGQFRRR.

It belongs to the IF-1 family. In terms of assembly, component of the 30S ribosomal translation pre-initiation complex which assembles on the 30S ribosome in the order IF-2 and IF-3, IF-1 and N-formylmethionyl-tRNA(fMet); mRNA recruitment can occur at any time during PIC assembly.

It is found in the cytoplasm. Its function is as follows. One of the essential components for the initiation of protein synthesis. Stabilizes the binding of IF-2 and IF-3 on the 30S subunit to which N-formylmethionyl-tRNA(fMet) subsequently binds. Helps modulate mRNA selection, yielding the 30S pre-initiation complex (PIC). Upon addition of the 50S ribosomal subunit IF-1, IF-2 and IF-3 are released leaving the mature 70S translation initiation complex. The sequence is that of Translation initiation factor IF-1 from Rhodopseudomonas palustris (strain BisB5).